The primary structure comprises 107 residues: ATP synthase subunit c (107 aa).

Transmembrane regions (helical) follow at residues I4–Q24, F29–M49, and M74–I94.

This sequence belongs to the ATPase C chain family. F-type ATPases have 2 components, F(1) - the catalytic core - and F(0) - the membrane proton channel. F(1) has five subunits: alpha(3), beta(3), gamma(1), delta(1), epsilon(1). F(0) has three main subunits: a(1), b(2) and c(10-14). The alpha and beta chains form an alternating ring which encloses part of the gamma chain. F(1) is attached to F(0) by a central stalk formed by the gamma and epsilon chains, while a peripheral stalk is formed by the delta and b chains.

It is found in the cell inner membrane. In terms of biological role, f(1)F(0) ATP synthase produces ATP from ADP in the presence of a proton or sodium gradient. F-type ATPases consist of two structural domains, F(1) containing the extramembraneous catalytic core and F(0) containing the membrane proton channel, linked together by a central stalk and a peripheral stalk. During catalysis, ATP synthesis in the catalytic domain of F(1) is coupled via a rotary mechanism of the central stalk subunits to proton translocation. Its function is as follows. Key component of the F(0) channel; it plays a direct role in translocation across the membrane. A homomeric c-ring of between 10-14 subunits forms the central stalk rotor element with the F(1) delta and epsilon subunits. This chain is ATP synthase subunit c, found in Campylobacter lari (strain RM2100 / D67 / ATCC BAA-1060).